A 355-amino-acid polypeptide reads, in one-letter code: Putative cyclin-A3-1 (355 aa).

Belongs to the cyclin family. Cyclin AB subfamily.

The chain is Putative cyclin-A3-1 (CYCA3-1) from Arabidopsis thaliana (Mouse-ear cress).